The chain runs to 224 residues: Large ribosomal subunit protein bL25 (224 aa).

The protein belongs to the bacterial ribosomal protein bL25 family. CTC subfamily. In terms of assembly, part of the 50S ribosomal subunit; part of the 5S rRNA/L5/L18/L25 subcomplex. Contacts the 5S rRNA. Binds to the 5S rRNA independently of L5 and L18.

Its function is as follows. This is one of the proteins that binds to the 5S RNA in the ribosome where it forms part of the central protuberance. The protein is Large ribosomal subunit protein bL25 of Psychrobacter arcticus (strain DSM 17307 / VKM B-2377 / 273-4).